The sequence spans 141 residues: Large ribosomal subunit protein uL11 (141 aa).

This sequence belongs to the universal ribosomal protein uL11 family. As to quaternary structure, part of the ribosomal stalk of the 50S ribosomal subunit. Interacts with L10 and the large rRNA to form the base of the stalk. L10 forms an elongated spine to which L12 dimers bind in a sequential fashion forming a multimeric L10(L12)X complex. One or more lysine residues are methylated.

Its function is as follows. Forms part of the ribosomal stalk which helps the ribosome interact with GTP-bound translation factors. This chain is Large ribosomal subunit protein uL11, found in Clostridium perfringens (strain ATCC 13124 / DSM 756 / JCM 1290 / NCIMB 6125 / NCTC 8237 / Type A).